We begin with the raw amino-acid sequence, 150 residues long: Transcriptional repressor NrdR (150 aa).

Positions 1 to 26 are disordered; sequence MKCPFCGNSDSKVVDSRPDKGGSGIR. The segment at 3–34 is a zinc-finger region; sequence CPFCGNSDSKVVDSRPDKGGSGIRRRRECEQC. An ATP-cone domain is found at 49–139; the sequence is PLVLKKDGRR…VYRSFRDINE (91 aa).

The protein belongs to the NrdR family. Zn(2+) is required as a cofactor.

Functionally, negatively regulates transcription of bacterial ribonucleotide reductase nrd genes and operons by binding to NrdR-boxes. The sequence is that of Transcriptional repressor NrdR from Pelobacter propionicus (strain DSM 2379 / NBRC 103807 / OttBd1).